A 1225-amino-acid polypeptide reads, in one-letter code: DNA-directed RNA polymerase subunit beta' (1225 aa).

Zn(2+) is bound by residues C60, C62, C75, and C78. Mg(2+) contacts are provided by D450, D452, and D454. Residues C818, C892, C899, and C902 each contribute to the Zn(2+) site.

This sequence belongs to the RNA polymerase beta' chain family. The RNAP catalytic core consists of 2 alpha, 1 beta, 1 beta' and 1 omega subunit. When a sigma factor is associated with the core the holoenzyme is formed, which can initiate transcription. Requires Mg(2+) as cofactor. It depends on Zn(2+) as a cofactor.

The catalysed reaction is RNA(n) + a ribonucleoside 5'-triphosphate = RNA(n+1) + diphosphate. In terms of biological role, DNA-dependent RNA polymerase catalyzes the transcription of DNA into RNA using the four ribonucleoside triphosphates as substrates. The chain is DNA-directed RNA polymerase subunit beta' from Streptococcus pneumoniae (strain ATCC 700669 / Spain 23F-1).